The chain runs to 440 residues: UDP-N-acetylmuramoylalanine--D-glutamate ligase (440 aa).

128–134 (GTNGKTT) is a binding site for ATP.

The protein belongs to the MurCDEF family.

It localises to the cytoplasm. It carries out the reaction UDP-N-acetyl-alpha-D-muramoyl-L-alanine + D-glutamate + ATP = UDP-N-acetyl-alpha-D-muramoyl-L-alanyl-D-glutamate + ADP + phosphate + H(+). Its pathway is cell wall biogenesis; peptidoglycan biosynthesis. Functionally, cell wall formation. Catalyzes the addition of glutamate to the nucleotide precursor UDP-N-acetylmuramoyl-L-alanine (UMA). This chain is UDP-N-acetylmuramoylalanine--D-glutamate ligase, found in Lawsonia intracellularis (strain PHE/MN1-00).